A 550-amino-acid chain; its full sequence is Glucose-6-phosphate isomerase (550 aa).

D-glucose 6-phosphate is bound by residues 163 to 164, 214 to 219, Gln-358, Glu-362, His-393, and Lys-515; these read GS and SKTFTT. The active-site Proton donor is Glu-362. Active-site residues include His-393 and Lys-515.

The protein belongs to the GPI family. Homodimer.

It localises to the cytoplasm. The enzyme catalyses alpha-D-glucose 6-phosphate = beta-D-fructose 6-phosphate. Its pathway is carbohydrate degradation; glycolysis; D-glyceraldehyde 3-phosphate and glycerone phosphate from D-glucose: step 2/4. Functionally, in the cytoplasm, catalyzes the conversion of glucose-6-phosphate to fructose-6-phosphate, the second step in glycolysis, and the reverse reaction during gluconeogenesis. The protein is Glucose-6-phosphate isomerase (PGI1) of Candida albicans (strain SC5314 / ATCC MYA-2876) (Yeast).